Consider the following 130-residue polypeptide: Small ribosomal subunit protein uS8 (130 aa).

Belongs to the universal ribosomal protein uS8 family. As to quaternary structure, part of the 30S ribosomal subunit.

Its function is as follows. One of the primary rRNA binding proteins, it binds directly to 16S rRNA central domain where it helps coordinate assembly of the platform of the 30S subunit. This Thermococcus sibiricus (strain DSM 12597 / MM 739) protein is Small ribosomal subunit protein uS8.